A 699-amino-acid chain; its full sequence is Elongation factor G (699 aa).

Residues 8–287 (EKLRNIGIVA…AVIDYLPSPI (280 aa)) enclose the tr-type G domain. GTP is bound by residues 17 to 24 (AHIDAGKT), 85 to 89 (DTPGH), and 139 to 142 (NKMD).

It belongs to the TRAFAC class translation factor GTPase superfamily. Classic translation factor GTPase family. EF-G/EF-2 subfamily.

The protein resides in the cytoplasm. In terms of biological role, catalyzes the GTP-dependent ribosomal translocation step during translation elongation. During this step, the ribosome changes from the pre-translocational (PRE) to the post-translocational (POST) state as the newly formed A-site-bound peptidyl-tRNA and P-site-bound deacylated tRNA move to the P and E sites, respectively. Catalyzes the coordinated movement of the two tRNA molecules, the mRNA and conformational changes in the ribosome. The sequence is that of Elongation factor G (fusA) from Aquifex aeolicus (strain VF5).